The chain runs to 495 residues: Flagellin (495 aa).

This sequence belongs to the bacterial flagellin family.

It localises to the secreted. The protein resides in the bacterial flagellum. Its function is as follows. Flagellin is the subunit protein which polymerizes to form the filaments of bacterial flagella. In Salmonella paratyphi A (strain ATCC 9150 / SARB42), this protein is Flagellin (fliC).